A 325-amino-acid chain; its full sequence is MDTWTLLLVLHTSLLLPWAEGATPTLRFVAVGDWGGVPNAPFHTAREMANAKQIGKVVQMLGAHFILSLGDNFYFSGVQSVSDKRFQETFEDVFSDRSLQNVPWYVLAGNHDHIGNVSAQIAYSKVSKRWNFPSPFYRLRFRIPRTNVSVAIYMLDTVTLCGNSNDFLSQQPERPRNLELARTQLAWLKRHLADAKEDYVLVAGHYPVWSIAEHGPTHCLVKKLQPLLVKYGVTAYLCGHDHNLQYLQDENGVGYVLSGAGNFMDPSTQHQRSVPNGYLRFHYGAENSLGGFAYLEITPKEMTVTYMEASGKSLFKTRLPKRAKA.

The signal sequence occupies residues methionine 1–glycine 21. Asparagine 116 and asparagine 147 each carry an N-linked (GlcNAc...) asparagine glycan.

Exists either as monomer or, after proteolytic processing, as a dimer of two chains linked by disulfide bond(s). Fe cation is required as a cofactor.

It is found in the lysosome. The enzyme catalyses a phosphate monoester + H2O = an alcohol + phosphate. In Oryctolagus cuniculus (Rabbit), this protein is Tartrate-resistant acid phosphatase type 5 (ACP5).